A 94-amino-acid chain; its full sequence is Pyrimidine/purine nucleoside phosphorylase (94 aa).

It belongs to the nucleoside phosphorylase PpnP family.

The enzyme catalyses a purine D-ribonucleoside + phosphate = a purine nucleobase + alpha-D-ribose 1-phosphate. The catalysed reaction is adenosine + phosphate = alpha-D-ribose 1-phosphate + adenine. It catalyses the reaction cytidine + phosphate = cytosine + alpha-D-ribose 1-phosphate. It carries out the reaction guanosine + phosphate = alpha-D-ribose 1-phosphate + guanine. The enzyme catalyses inosine + phosphate = alpha-D-ribose 1-phosphate + hypoxanthine. The catalysed reaction is thymidine + phosphate = 2-deoxy-alpha-D-ribose 1-phosphate + thymine. It catalyses the reaction uridine + phosphate = alpha-D-ribose 1-phosphate + uracil. It carries out the reaction xanthosine + phosphate = alpha-D-ribose 1-phosphate + xanthine. Functionally, catalyzes the phosphorolysis of diverse nucleosides, yielding D-ribose 1-phosphate and the respective free bases. Can use uridine, adenosine, guanosine, cytidine, thymidine, inosine and xanthosine as substrates. Also catalyzes the reverse reactions. The polypeptide is Pyrimidine/purine nucleoside phosphorylase (Vibrio campbellii (strain ATCC BAA-1116)).